Reading from the N-terminus, the 336-residue chain is Fructose-1,6-bisphosphatase class 1 (336 aa).

Mg(2+)-binding residues include E90, D112, L114, and D115. Substrate is bound by residues 115–118, N211, and K277; that span reads DGSS. E283 serves as a coordination point for Mg(2+).

This sequence belongs to the FBPase class 1 family. Homotetramer. Requires Mg(2+) as cofactor.

It is found in the cytoplasm. It carries out the reaction beta-D-fructose 1,6-bisphosphate + H2O = beta-D-fructose 6-phosphate + phosphate. The protein operates within carbohydrate biosynthesis; gluconeogenesis. This Pseudomonas fluorescens (strain SBW25) protein is Fructose-1,6-bisphosphatase class 1.